Consider the following 153-residue polypeptide: ATP synthase subunit b' (153 aa).

The chain crosses the membrane as a helical span at residues 20-40 (TLPLMAVQVVLLTFILNALFF).

Belongs to the ATPase B chain family. In terms of assembly, F-type ATPases have 2 components, F(1) - the catalytic core - and F(0) - the membrane proton channel. F(1) has five subunits: alpha(3), beta(3), gamma(1), delta(1), epsilon(1). F(0) has four main subunits: a(1), b(1), b'(1) and c(10-14). The alpha and beta chains form an alternating ring which encloses part of the gamma chain. F(1) is attached to F(0) by a central stalk formed by the gamma and epsilon chains, while a peripheral stalk is formed by the delta, b and b' chains.

The protein resides in the cellular thylakoid membrane. In terms of biological role, f(1)F(0) ATP synthase produces ATP from ADP in the presence of a proton or sodium gradient. F-type ATPases consist of two structural domains, F(1) containing the extramembraneous catalytic core and F(0) containing the membrane proton channel, linked together by a central stalk and a peripheral stalk. During catalysis, ATP synthesis in the catalytic domain of F(1) is coupled via a rotary mechanism of the central stalk subunits to proton translocation. Functionally, component of the F(0) channel, it forms part of the peripheral stalk, linking F(1) to F(0). The b'-subunit is a diverged and duplicated form of b found in plants and photosynthetic bacteria. The sequence is that of ATP synthase subunit b' from Prochlorococcus marinus (strain NATL1A).